The sequence spans 423 residues: Maltoporin 1 (423 aa).

An N-terminal signal peptide occupies residues 1 to 23 (MNTTLRALSVALAAALIAPSAFA).

The protein belongs to the porin LamB (TC 1.B.3) family. As to quaternary structure, homotrimer formed of three 18-stranded antiparallel beta-barrels, containing three independent channels.

Its subcellular location is the cell outer membrane. The catalysed reaction is beta-maltose(in) = beta-maltose(out). Involved in the transport of maltose and maltodextrins. The sequence is that of Maltoporin 1 from Klebsiella pneumoniae subsp. pneumoniae (strain ATCC 700721 / MGH 78578).